Here is a 76-residue protein sequence, read N- to C-terminus: Sec-independent protein translocase protein TatA (76 aa).

A helical membrane pass occupies residues 1–21 (MGGISITQLLIIVAIVVLLFG). Positions 45–76 (DDNKEKDAEFKSLSDDSETTAKTEKAKDKEQA) are disordered.

This sequence belongs to the TatA/E family. In terms of assembly, the Tat system comprises two distinct complexes: a TatABC complex, containing multiple copies of TatA, TatB and TatC subunits, and a separate TatA complex, containing only TatA subunits. Substrates initially bind to the TatABC complex, which probably triggers association of the separate TatA complex to form the active translocon.

The protein resides in the cell inner membrane. Part of the twin-arginine translocation (Tat) system that transports large folded proteins containing a characteristic twin-arginine motif in their signal peptide across membranes. TatA could form the protein-conducting channel of the Tat system. This is Sec-independent protein translocase protein TatA from Pasteurella multocida (strain Pm70).